A 369-amino-acid chain; its full sequence is DNA replication and repair protein RecF (369 aa).

Gly-30–Thr-37 contributes to the ATP binding site.

This sequence belongs to the RecF family.

The protein resides in the cytoplasm. In terms of biological role, the RecF protein is involved in DNA metabolism; it is required for DNA replication and normal SOS inducibility. RecF binds preferentially to single-stranded, linear DNA. It also seems to bind ATP. In Macrococcus caseolyticus (strain JCSC5402) (Macrococcoides caseolyticum), this protein is DNA replication and repair protein RecF.